Reading from the N-terminus, the 65-residue chain is U11-theraphotoxin-Cg1b (65 aa).

An N-terminal signal peptide occupies residues 1 to 21; sequence MKTTILVVILGLTLLFALSAA. Positions 22-29 are excised as a propeptide; that stretch reads TELKDEER. Intrachain disulfides connect cysteine 31–cysteine 45, cysteine 38–cysteine 50, and cysteine 44–cysteine 57.

This sequence belongs to the neurotoxin 10 (Hwtx-1) family. 32 (Jztx-16) subfamily. Expressed by the venom gland.

The protein resides in the secreted. Functionally, probable ion channel inhibitor. This chain is U11-theraphotoxin-Cg1b, found in Chilobrachys guangxiensis (Chinese earth tiger tarantula).